The primary structure comprises 396 residues: Argininosuccinate synthase (396 aa).

Residues 10-18 (AYSGGLDTS) and alanine 37 contribute to the ATP site. The L-citrulline site is built by tyrosine 88 and serine 93. Residue glycine 118 participates in ATP binding. Threonine 120, asparagine 124, and aspartate 125 together coordinate L-aspartate. Asparagine 124 is a binding site for L-citrulline. L-citrulline contacts are provided by arginine 128, serine 176, serine 185, glutamate 261, and tyrosine 273.

This sequence belongs to the argininosuccinate synthase family. Type 1 subfamily. Homotetramer.

Its subcellular location is the cytoplasm. It catalyses the reaction L-citrulline + L-aspartate + ATP = 2-(N(omega)-L-arginino)succinate + AMP + diphosphate + H(+). It functions in the pathway amino-acid biosynthesis; L-arginine biosynthesis; L-arginine from L-ornithine and carbamoyl phosphate: step 2/3. This chain is Argininosuccinate synthase, found in Nitratidesulfovibrio vulgaris (strain DP4) (Desulfovibrio vulgaris).